Here is a 156-residue protein sequence, read N- to C-terminus: Small ribosomal subunit protein uS7 (156 aa).

The protein belongs to the universal ribosomal protein uS7 family. As to quaternary structure, part of the 30S ribosomal subunit. Contacts proteins S9 and S11.

Functionally, one of the primary rRNA binding proteins, it binds directly to 16S rRNA where it nucleates assembly of the head domain of the 30S subunit. Is located at the subunit interface close to the decoding center, probably blocks exit of the E-site tRNA. The protein is Small ribosomal subunit protein uS7 of Methylobacterium nodulans (strain LMG 21967 / CNCM I-2342 / ORS 2060).